The sequence spans 291 residues: ATP synthase gamma chain (291 aa).

The protein belongs to the ATPase gamma chain family. F-type ATPases have 2 components, CF(1) - the catalytic core - and CF(0) - the membrane proton channel. CF(1) has five subunits: alpha(3), beta(3), gamma(1), delta(1), epsilon(1). CF(0) has three main subunits: a, b and c.

It localises to the cell inner membrane. Functionally, produces ATP from ADP in the presence of a proton gradient across the membrane. The gamma chain is believed to be important in regulating ATPase activity and the flow of protons through the CF(0) complex. This Neisseria meningitidis serogroup B (strain ATCC BAA-335 / MC58) protein is ATP synthase gamma chain.